A 356-amino-acid polypeptide reads, in one-letter code: DNA polymerase IV (356 aa).

Residues 6 to 187 (IIHIDMDYFF…LDIGDFPGVG (182 aa)) form the UmuC domain. Mg(2+) is bound by residues D10 and D105. E106 is a catalytic residue.

This sequence belongs to the DNA polymerase type-Y family. Monomer. The cofactor is Mg(2+).

Its subcellular location is the cytoplasm. It carries out the reaction DNA(n) + a 2'-deoxyribonucleoside 5'-triphosphate = DNA(n+1) + diphosphate. Functionally, poorly processive, error-prone DNA polymerase involved in untargeted mutagenesis. Copies undamaged DNA at stalled replication forks, which arise in vivo from mismatched or misaligned primer ends. These misaligned primers can be extended by PolIV. Exhibits no 3'-5' exonuclease (proofreading) activity. May be involved in translesional synthesis, in conjunction with the beta clamp from PolIII. This is DNA polymerase IV from Staphylococcus aureus (strain COL).